The primary structure comprises 305 residues: Ribonuclease BN (305 aa).

Zn(2+) is bound by residues histidine 64, histidine 66, aspartate 68, histidine 69, histidine 141, aspartate 212, and histidine 270. The active-site Proton acceptor is the aspartate 68.

Belongs to the RNase Z family. RNase BN subfamily. In terms of assembly, homodimer. Requires Zn(2+) as cofactor.

Functionally, zinc phosphodiesterase, which has both exoribonuclease and endoribonuclease activities. This Escherichia coli O139:H28 (strain E24377A / ETEC) protein is Ribonuclease BN.